The chain runs to 645 residues: Acetyl-coenzyme A synthetase 2 (645 aa).

CoA contacts are provided by residues 190 to 193 (RGGK), Thr308, and Asn332. Residues 384–386 (GEP), 408–413 (DTWWQT), Asp497, and Arg512 each bind ATP. Ser520 lines the CoA pocket. Arg523 is an ATP binding site. Val534, His536, and Val539 together coordinate Mg(2+). N6-acetyllysine is present on Lys606.

This sequence belongs to the ATP-dependent AMP-binding enzyme family. Requires Mg(2+) as cofactor. In terms of processing, acetylated. Deacetylation by the SIR2-homolog deacetylase activates the enzyme.

The catalysed reaction is acetate + ATP + CoA = acetyl-CoA + AMP + diphosphate. Its function is as follows. Catalyzes the conversion of acetate into acetyl-CoA (AcCoA), an essential intermediate at the junction of anabolic and catabolic pathways. AcsA undergoes a two-step reaction. In the first half reaction, AcsA combines acetate with ATP to form acetyl-adenylate (AcAMP) intermediate. In the second half reaction, it can then transfer the acetyl group from AcAMP to the sulfhydryl group of CoA, forming the product AcCoA. This is Acetyl-coenzyme A synthetase 2 from Pseudomonas aeruginosa (strain ATCC 15692 / DSM 22644 / CIP 104116 / JCM 14847 / LMG 12228 / 1C / PRS 101 / PAO1).